The sequence spans 173 residues: NADH-quinone oxidoreductase subunit B 1 (173 aa).

Cys42, Cys43, Cys107, and Cys137 together coordinate [4Fe-4S] cluster.

The protein belongs to the complex I 20 kDa subunit family. In terms of assembly, NDH-1 is composed of 14 different subunits. Subunits NuoB, C, D, E, F, and G constitute the peripheral sector of the complex. [4Fe-4S] cluster serves as cofactor.

Its subcellular location is the cell inner membrane. The catalysed reaction is a quinone + NADH + 5 H(+)(in) = a quinol + NAD(+) + 4 H(+)(out). In terms of biological role, NDH-1 shuttles electrons from NADH, via FMN and iron-sulfur (Fe-S) centers, to quinones in the respiratory chain. The immediate electron acceptor for the enzyme in this species is believed to be ubiquinone. Couples the redox reaction to proton translocation (for every two electrons transferred, four hydrogen ions are translocated across the cytoplasmic membrane), and thus conserves the redox energy in a proton gradient. This Anaeromyxobacter sp. (strain K) protein is NADH-quinone oxidoreductase subunit B 1.